The chain runs to 140 residues: Histone H2B.1, sperm (140 aa).

The tract at residues 1–47 (MPSQRSPTKRSPTKRSPQKGAGKGGKGSKRGGKARRRGGAAVRRRRR) is disordered. 3 short sequence motifs (SPKK motif) span residues 6 to 9 (SPTK), 11 to 14 (SPTK), and 16 to 19 (SPQK). 2 stretches are compositionally biased toward basic residues: residues 7 to 17 (PTKRSPTKRSP) and 26 to 47 (KGSK…RRRR). 2 positions are modified to phosphoserine: S11 and S16. The O-linked (GlcNAc) serine glycan is linked to S127. Residue K135 forms a Glycyl lysine isopeptide (Lys-Gly) (interchain with G-Cter in ubiquitin) linkage.

Belongs to the histone H2B family. The nucleosome is a histone octamer containing two molecules each of H2A, H2B, H3 and H4 assembled in one H3-H4 heterotetramer and two H2A-H2B heterodimers. The octamer wraps approximately 147 bp of DNA. In terms of processing, monoubiquitination of Lys-135 gives a specific tag for epigenetic transcriptional activation and is also prerequisite for histone H3 'Lys-4' and 'Lys-79' methylation. Phosphorylated on SPKK motifs 2 and 3; which may regulate DNA binding. Dephosphorylated during maturation of spermatids to mature sperm and rephosphorylated at fertilization. Post-translationally, glcNAcylation at Ser-127 promotes monoubiquitination of Lys-135. It fluctuates in response to extracellular glucose, and associates with transcribed genes.

The protein localises to the nucleus. Its subcellular location is the chromosome. Functionally, core component of nucleosome. Nucleosomes wrap and compact DNA into chromatin, limiting DNA accessibility to the cellular machineries which require DNA as a template. Histones thereby play a central role in transcription regulation, DNA repair, DNA replication and chromosomal stability. DNA accessibility is regulated via a complex set of post-translational modifications of histones, also called histone code, and nucleosome remodeling. The protein is Histone H2B.1, sperm of Strongylocentrotus purpuratus (Purple sea urchin).